We begin with the raw amino-acid sequence, 829 residues long: Pre-mRNA-splicing factor syf1 (829 aa).

HAT repeat units follow at residues 15 to 47 (SLVSEEDFPYEQDIVRNPGSTKPWLAYIEYKLQ), 49 to 81 (GTVQEQAYIMERACVQLPRSYKLWKMYLRFRTK), 93 to 125 (SEYQKVNSLFERALILLNKMPRIWEMYLKFLMQ), 127 to 161 (PLVTHTRRTFDRALRALPITQHNRIWALYRPFANS), 163 to 182 (EGETAVKIWRRYMQVHPEDA), 277 to 312 (GSFERARDVFEEGITTVMTVRDFTLVFDSYTEFEES), 380 to 418 (DNKEEVVKTYLDAIEAIQPKKAVGALHQLWTNYAKFYEA), 420 to 456 (GDLSSARRIMEKAVKVPYKSVAELADMWIEWAEMELR), 473 to 505 (APKRSTVDYFDETLSPQQRVHKSWKLWSFYVDL), 544 to 578 (KYFEESFKIYERGLDLFSYPVAFELWNLYLTKAVD), 581 to 615 (ISIERLRDLFEQAVEDCPPKFAKVIYLMYGNLEEE), and 689 to 723 (GEIDRARAIYGHASQFCDPRTNPGFWTKWDQFEVQ). Residues 799–829 (AASEGPKGGSMPVQPVEVHNPDAIDLDEMDE) form a disordered region.

Belongs to the crooked-neck family. Associated with the spliceosome.

Its subcellular location is the nucleus. Functionally, involved in pre-mRNA splicing and cell cycle progression. The sequence is that of Pre-mRNA-splicing factor syf1 (msp-41) from Neurospora crassa (strain ATCC 24698 / 74-OR23-1A / CBS 708.71 / DSM 1257 / FGSC 987).